A 246-amino-acid polypeptide reads, in one-letter code: Carbonic anhydrase (246 aa).

The first 22 residues, 1 to 22 (MKTSLGKAALLALSMMPVTVFA), serve as a signal peptide directing secretion. Residues 23-246 (SHWSYEGEGS…QPLNGRVVIE (224 aa)) enclose the Alpha-carbonic anhydrase domain. Cysteines 46 and 201 form a disulfide. The active-site Proton acceptor is His-84. Positions 111, 113, and 130 each coordinate Zn(2+). Residue 197–198 (TT) coordinates substrate.

This sequence belongs to the alpha-carbonic anhydrase family. The cofactor is Zn(2+).

It localises to the periplasm. The enzyme catalyses hydrogencarbonate + H(+) = CO2 + H2O. Reversible hydration of carbon dioxide. The sequence is that of Carbonic anhydrase (cah) from Klebsiella pneumoniae.